The following is a 150-amino-acid chain: Globin-2 (150 aa).

Residues 11–150 (PLSDAEKNKI…MICILLSSAY (140 aa)) enclose the Globin domain. His74 and His106 together coordinate heme b.

The protein belongs to the globin family. In terms of assembly, monomer.

The protein is Globin-2 of Mordacia mordax (Southern hemisphere lamprey).